A 199-amino-acid chain; its full sequence is Recombination protein RecR (199 aa).

A C4-type zinc finger spans residues 56 to 71 (CATCGNVAQEELCNIC). Positions 79 to 174 (SVICVVEEPK…KVTRLASGLP (96 aa)) constitute a Toprim domain.

It belongs to the RecR family.

Its function is as follows. May play a role in DNA repair. It seems to be involved in an RecBC-independent recombinational process of DNA repair. It may act with RecF and RecO. This chain is Recombination protein RecR, found in Streptomyces avermitilis (strain ATCC 31267 / DSM 46492 / JCM 5070 / NBRC 14893 / NCIMB 12804 / NRRL 8165 / MA-4680).